The following is a 124-amino-acid chain: Small ribosomal subunit protein uS12 (124 aa).

Residue Asp89 is modified to 3-methylthioaspartic acid.

Belongs to the universal ribosomal protein uS12 family. As to quaternary structure, part of the 30S ribosomal subunit. Contacts proteins S8 and S17. May interact with IF1 in the 30S initiation complex.

Its function is as follows. With S4 and S5 plays an important role in translational accuracy. Interacts with and stabilizes bases of the 16S rRNA that are involved in tRNA selection in the A site and with the mRNA backbone. Located at the interface of the 30S and 50S subunits, it traverses the body of the 30S subunit contacting proteins on the other side and probably holding the rRNA structure together. The combined cluster of proteins S8, S12 and S17 appears to hold together the shoulder and platform of the 30S subunit. The chain is Small ribosomal subunit protein uS12 from Psychrobacter sp. (strain PRwf-1).